The primary structure comprises 289 residues: Fumagillin beta-trans-bergamotene synthase af520 (289 aa).

6 helical membrane-spanning segments follow: residues 35–55, 95–115, 142–162, 165–185, 222–242, and 262–282; these read AVAL…GFLW, TLLY…TNTI, LIGA…FDGG, LHGL…TTGH, AWTI…LAYV, and YVSY…PIFP.

This sequence belongs to the paxB family.

It is found in the membrane. It catalyses the reaction (2E,6E)-farnesyl diphosphate = (+)-exo-beta-bergamotene + diphosphate. The protein operates within secondary metabolite biosynthesis; terpenoid biosynthesis. Beta-trans-bergamotene synthase; part of the gene cluster that mediates the biosynthesis of fumagillin, a meroterpenoid that has numerous biological activities including irreversible inhibition of human type 2 methionine aminopeptidase (METAP2). Within the pathway, the membrane-bound fumagillin beta-trans-bergamotene synthase af520 converts farnesyl pyrophosphate (FPP) to beta-trans-bergamotene. The pathway begins with the conversion of FPP to beta-trans-bergamotene by af520. The multifunctional cytochrome P450 monooxygenase af510 then converts beta-trans-bergamotene into 5-keto-demethoxyfumagillol via several oxydation steps. 5-keto-demethoxyfumagillol is then subjected to successive C-6 hydroxylation and O-methylation by the dioxygenase af480 and O-methyltransferase af390-400, respectively, to yield 5-keto-fumagillol, which is then stereoselectively reduced by the keto-reductase af490 to 5R-hydroxy-seco-sesquiterpene. The next step is the polyketide transferase af380-catalyzed transfer of a dodecapentaenoyl group synthesized by the polyketide synthase af370 onto 5R-hydroxy-seco-sesquiterpene which leads to the production of prefumagillin. Finally, oxidative cleavage by the monooxygenase af470 converts prefumagillin to fumagillin. The chain is Fumagillin beta-trans-bergamotene synthase af520 from Aspergillus fumigatus (strain ATCC MYA-4609 / CBS 101355 / FGSC A1100 / Af293) (Neosartorya fumigata).